The chain runs to 779 residues: LPS-assembly protein LptD (779 aa).

An N-terminal signal peptide occupies residues 1-23 (MKIRYSVLSTFIISALYSQDTQA).

Belongs to the LptD family. As to quaternary structure, component of the lipopolysaccharide transport and assembly complex. Interacts with LptE and LptA.

The protein localises to the cell outer membrane. In terms of biological role, together with LptE, is involved in the assembly of lipopolysaccharide (LPS) at the surface of the outer membrane. The protein is LPS-assembly protein LptD of Haemophilus ducreyi (strain 35000HP / ATCC 700724).